The sequence spans 227 residues: Ashwin (227 aa).

Basic and acidic residues predominate over residues 71–84; the sequence is LPRSRWGKRMEKSR. The disordered stretch occupies residues 71–227; that stretch reads LPRSRWGKRM…KKKIQHITWP (157 aa). A compositionally biased stretch (low complexity) spans 88 to 98; that stretch reads SSSSTHSSSTD. The segment covering 153–173 has biased composition (polar residues); that stretch reads GASTNCSSSNFSNRTPVSSSG. Residues 178–191 are compositionally biased toward low complexity; that stretch reads SPSNHSNSSVHSNN. A compositionally biased stretch (basic and acidic residues) spans 204–219; the sequence is GEPDTAKDIKSPETKK.

It belongs to the ashwin family.

The protein localises to the nucleus. The protein is Ashwin of Danio rerio (Zebrafish).